The primary structure comprises 284 residues: Nucleotide-binding protein Sbal_3671 (284 aa).

ATP is bound at residue 8–15 (GRSGSGKS). A GTP-binding site is contributed by 56–59 (DVRN).

The protein belongs to the RapZ-like family.

In terms of biological role, displays ATPase and GTPase activities. This chain is Nucleotide-binding protein Sbal_3671, found in Shewanella baltica (strain OS155 / ATCC BAA-1091).